A 119-amino-acid chain; its full sequence is Holo-[acyl-carrier-protein] synthase (119 aa).

Asp6 and Glu51 together coordinate Mg(2+).

It belongs to the P-Pant transferase superfamily. AcpS family. It depends on Mg(2+) as a cofactor.

The protein localises to the cytoplasm. The enzyme catalyses apo-[ACP] + CoA = holo-[ACP] + adenosine 3',5'-bisphosphate + H(+). In terms of biological role, transfers the 4'-phosphopantetheine moiety from coenzyme A to a Ser of acyl-carrier-protein. This chain is Holo-[acyl-carrier-protein] synthase, found in Sulfurovum sp. (strain NBC37-1).